A 156-amino-acid polypeptide reads, in one-letter code: Small ribosomal subunit protein uS7 (156 aa).

It belongs to the universal ribosomal protein uS7 family. Part of the 30S ribosomal subunit. Contacts proteins S9 and S11.

In terms of biological role, one of the primary rRNA binding proteins, it binds directly to 16S rRNA where it nucleates assembly of the head domain of the 30S subunit. Is located at the subunit interface close to the decoding center, probably blocks exit of the E-site tRNA. The sequence is that of Small ribosomal subunit protein uS7 from Nostoc punctiforme (strain ATCC 29133 / PCC 73102).